Reading from the N-terminus, the 283-residue chain is Glutamate racemase (283 aa).

Substrate contacts are provided by residues 28 to 29 (DS) and 60 to 61 (YG). Residue Cys92 is the Proton donor/acceptor of the active site. Substrate is bound at residue 93–94 (NT). Cys204 serves as the catalytic Proton donor/acceptor. 205 to 206 (TH) serves as a coordination point for substrate.

Belongs to the aspartate/glutamate racemases family.

The enzyme catalyses L-glutamate = D-glutamate. Its pathway is cell wall biogenesis; peptidoglycan biosynthesis. In terms of biological role, provides the (R)-glutamate required for cell wall biosynthesis. The polypeptide is Glutamate racemase (Klebsiella pneumoniae (strain 342)).